The following is a 198-amino-acid chain: ATP-dependent Clp protease proteolytic subunit (198 aa).

Catalysis depends on serine 101, which acts as the Nucleophile. Histidine 126 is an active-site residue.

It belongs to the peptidase S14 family. As to quaternary structure, component of the chloroplastic Clp protease core complex.

It is found in the plastid. The protein resides in the chloroplast stroma. The enzyme catalyses Hydrolysis of proteins to small peptides in the presence of ATP and magnesium. alpha-casein is the usual test substrate. In the absence of ATP, only oligopeptides shorter than five residues are hydrolyzed (such as succinyl-Leu-Tyr-|-NHMec, and Leu-Tyr-Leu-|-Tyr-Trp, in which cleavage of the -Tyr-|-Leu- and -Tyr-|-Trp bonds also occurs).. Functionally, cleaves peptides in various proteins in a process that requires ATP hydrolysis. Has a chymotrypsin-like activity. Plays a major role in the degradation of misfolded proteins. The polypeptide is ATP-dependent Clp protease proteolytic subunit (Solanum bulbocastanum (Wild potato)).